A 357-amino-acid polypeptide reads, in one-letter code: Cobalt-precorrin-5B C(1)-methyltransferase (357 aa).

Belongs to the CbiD family.

The catalysed reaction is Co-precorrin-5B + S-adenosyl-L-methionine = Co-precorrin-6A + S-adenosyl-L-homocysteine. The protein operates within cofactor biosynthesis; adenosylcobalamin biosynthesis; cob(II)yrinate a,c-diamide from sirohydrochlorin (anaerobic route): step 6/10. Functionally, catalyzes the methylation of C-1 in cobalt-precorrin-5B to form cobalt-precorrin-6A. The polypeptide is Cobalt-precorrin-5B C(1)-methyltransferase (Alkaliphilus oremlandii (strain OhILAs) (Clostridium oremlandii (strain OhILAs))).